Here is a 547-residue protein sequence, read N- to C-terminus: Chaperonin GroEL 1 (547 aa).

ATP-binding positions include 29 to 32 (TLGP), 86 to 90 (DGTTT), Gly418, 482 to 484 (NAA), and Asp498.

It belongs to the chaperonin (HSP60) family. As to quaternary structure, forms a cylinder of 14 subunits composed of two heptameric rings stacked back-to-back. Interacts with the co-chaperonin GroES.

It is found in the cytoplasm. It carries out the reaction ATP + H2O + a folded polypeptide = ADP + phosphate + an unfolded polypeptide.. Functionally, together with its co-chaperonin GroES, plays an essential role in assisting protein folding. The GroEL-GroES system forms a nano-cage that allows encapsulation of the non-native substrate proteins and provides a physical environment optimized to promote and accelerate protein folding. The chain is Chaperonin GroEL 1 from Corynebacterium jeikeium (strain K411).